The following is a 135-amino-acid chain: uncharacterized protein (135 aa).

A helical membrane pass occupies residues 35-55 (VVLVLIGATIILVVISVLVVS).

It is found in the membrane. This is an uncharacterized protein from Saccharomyces cerevisiae (strain ATCC 204508 / S288c) (Baker's yeast).